A 63-amino-acid polypeptide reads, in one-letter code: MKAQDLREKSVEELNSELLNLLKEQFNLRMQAATGQLQQTHTLKAVRRDIARVKTVLTEKAGA.

The protein belongs to the universal ribosomal protein uL29 family.

In Vibrio cholerae serotype O1 (strain ATCC 39541 / Classical Ogawa 395 / O395), this protein is Large ribosomal subunit protein uL29.